The sequence spans 1154 residues: DNA-directed RNA polymerase subunit beta (1154 aa).

Residues 1108–1123 show a composition bias toward basic and acidic residues; that stretch reads ELGIDIQGEDRSERAG. Residues 1108–1136 form a disordered region; sequence ELGIDIQGEDRSERAGEPASPDEMDDEEE. Over residues 1127–1136 the composition is skewed to acidic residues; that stretch reads SPDEMDDEEE.

This sequence belongs to the RNA polymerase beta chain family. As to quaternary structure, the RNAP catalytic core consists of 2 alpha, 1 beta, 1 beta' and 1 omega subunit. When a sigma factor is associated with the core the holoenzyme is formed, which can initiate transcription.

It catalyses the reaction RNA(n) + a ribonucleoside 5'-triphosphate = RNA(n+1) + diphosphate. Functionally, DNA-dependent RNA polymerase catalyzes the transcription of DNA into RNA using the four ribonucleoside triphosphates as substrates. This Heliobacterium modesticaldum (strain ATCC 51547 / Ice1) protein is DNA-directed RNA polymerase subunit beta.